The following is a 102-amino-acid chain: Small ribosomal subunit protein uS10 (102 aa).

Belongs to the universal ribosomal protein uS10 family. Part of the 30S ribosomal subunit.

In terms of biological role, involved in the binding of tRNA to the ribosomes. In Methylobacterium nodulans (strain LMG 21967 / CNCM I-2342 / ORS 2060), this protein is Small ribosomal subunit protein uS10.